The sequence spans 118 residues: MSRVKRGVTARARHKKVLKQAKGYYGARSRVYRVAKQAVIKAGQYAYRDRKVKKRTFRSLWIVRINAAARQHDISYSQLINGLNKAGVELDRKALAELAVYNKDAFAAVVEKAKAALA.

The protein belongs to the bacterial ribosomal protein bL20 family.

Functionally, binds directly to 23S ribosomal RNA and is necessary for the in vitro assembly process of the 50S ribosomal subunit. It is not involved in the protein synthesizing functions of that subunit. The polypeptide is Large ribosomal subunit protein bL20 (Francisella philomiragia subsp. philomiragia (strain ATCC 25017 / CCUG 19701 / FSC 153 / O#319-036)).